A 125-amino-acid chain; its full sequence is uncharacterized protein (125 aa).

The protein localises to the plastid. This is an uncharacterized protein from Euglena longa (Euglenophycean alga).